Reading from the N-terminus, the 600-residue chain is ATP-dependent lipid A-core flippase (600 aa).

Transmembrane regions (helical) follow at residues 28-48 (IMAV…IAFI), 80-100 (IMLM…VANF), 182-202 (WKLS…ISVV), 267-287 (ISQP…LYAA), and 295-315 (DLTA…LQPI). Positions 28-327 (IMAVLGLITY…LTRVNAEFQR (300 aa)) constitute an ABC transmembrane type-1 domain. Residues 359 to 596 (LAFDNVTFAY…AGIYANLYQM (238 aa)) form the ABC transporter domain. Position 393 to 400 (393 to 400 (GRSGSGKS)) interacts with ATP.

The protein belongs to the ABC transporter superfamily. Lipid exporter (TC 3.A.1.106) family. As to quaternary structure, homodimer.

The protein resides in the cell inner membrane. The enzyme catalyses ATP + H2O + lipid A-core oligosaccharideSide 1 = ADP + phosphate + lipid A-core oligosaccharideSide 2.. Its function is as follows. Involved in lipopolysaccharide (LPS) biosynthesis. Translocates lipid A-core from the inner to the outer leaflet of the inner membrane. Transmembrane domains (TMD) form a pore in the inner membrane and the ATP-binding domain (NBD) is responsible for energy generation. The polypeptide is ATP-dependent lipid A-core flippase (Shewanella frigidimarina (strain NCIMB 400)).